An 85-amino-acid polypeptide reads, in one-letter code: Polcalcin Aln g 4 (85 aa).

2 EF-hand domains span residues 7 to 42 (QDQA…LGSV) and 45 to 77 (DEVK…NRGL). Ca(2+) contacts are provided by Asp-20, Asn-22, Asp-24, Lys-26, Glu-31, Asp-55, Asp-57, Asp-59, and Glu-66.

This is Polcalcin Aln g 4 from Alnus glutinosa (European alder).